Consider the following 732-residue polypeptide: MDNQLFFKSIIATLPKRIHKCQTVSKAPENCAKMPKSIQFRGFSGTGEPFRRLDFRMGQRAFSYERQRPLAFLSFSSLPGRREGSAWTERLRALWKHCKKDQFKAEGLFRLIKDINLWIAAYKKLSPGSKNDGERPKGTSIKALETLRDSVINPPPTLGGGSSTGRSWPKGHETLERGSKALGPESPKETSLALQKKRRRPEMASPHTILPRVLRTHKVSRALWVVGPSDASLALRGLTQKDKDILVQEVIRSILETLYEPYFLSCSHGFRPGRSQHTCLKQIRRDFVGTVWFIEGETSQYFNKIDKQVLIGLMRRRIRDNRFLNLVQKEIKTSLRAGAEGTGVGPLLCNIVLHELDLFVMRLKRIVDRGRRRAVNPESKELWRQSAALIDRTTAHRARVPFPSGAFGRGLGHPQETRQINYVRFADDFLIGVIGPRALAERIRGLVTRFIEVRLKLRLTLDKTRKPIQSRPNTLPAHYVPMGPKETGPKVENDFTISGGPGKKKTQIFCITKNKKIPFLGYLISRDSKHTYNLVRRGRRYRIRRSGGLSLLVDMQKVINRLAEKGFCDKSGHPKPNFAYFQYPQSYSVARIASILRGLANYYHLANSKRQCVTRLSYILRTSLAKTYAAKFKLGTAAKVFAKGGRDLSKPIKAKKARRPLLNRVLGSKTTAHRRRGAGSEGHSPAIPYTRYGQIKLPDTKPLTKNWQPGQARLNCIAKKNLYQNCNREGND.

The segment at 145–207 (ETLRDSVINP…RRRPEMASPH (63 aa)) is disordered. Over residues 170–179 (KGHETLERGS) the composition is skewed to basic and acidic residues. In terms of domain architecture, Reverse transcriptase spans 176–524 (ERGSKALGPE…KKIPFLGYLI (349 aa)).

The protein localises to the mitochondrion. This is an uncharacterized protein from Marchantia polymorpha (Common liverwort).